We begin with the raw amino-acid sequence, 123 residues long: Large ribosomal subunit protein uL14 (123 aa).

This sequence belongs to the universal ribosomal protein uL14 family. In terms of assembly, part of the 50S ribosomal subunit. Forms a cluster with proteins L3 and L19. In the 70S ribosome, L14 and L19 interact and together make contacts with the 16S rRNA in bridges B5 and B8.

Binds to 23S rRNA. Forms part of two intersubunit bridges in the 70S ribosome. This Histophilus somni (strain 129Pt) (Haemophilus somnus) protein is Large ribosomal subunit protein uL14.